A 252-amino-acid chain; its full sequence is MEGIQHPIPRTVEEVFSDFRGRRAGLIKALSTDVQKFYHQCDPEKENLCLYGLPNETWEVNLPVEEVPPELPEPALGINFARDGMQEKDWISLVAVHSDSWLISVAFYFGARFGFGKNERKRLFQMINDLPTIFEVVTGNAKQSKDQSANHNSSRSKSSGGKPRHSESHTKASKMSPPPRKEDESGDEDEDDEQGAVCGACGDNYGGDEFWICCDACEKWFHGKCVKITPAKAEHIKHYKCPSCTTSKKMKA.

Residues 141-193 (AKQSKDQSANHNSSRSKSSGGKPRHSESHTKASKMSPPPRKEDESGDEDEDDE) are disordered. Residues 149–161 (ANHNSSRSKSSGG) show a composition bias toward low complexity. Residue serine 176 is modified to Phosphoserine. Acidic residues predominate over residues 184-193 (ESGDEDEDDE). Residues 195 to 247 (GAVCGACGDNYGGDEFWICCDACEKWFHGKCVKITPAKAEHIKHYKCPSCTTS) form a PHD-type zinc finger.

This sequence belongs to the Alfin family. As to quaternary structure, interacts with H3K4me3 and to a lesser extent with H3K4me2. Ubiquitously expressed.

It localises to the nucleus. In terms of biological role, histone-binding component that specifically recognizes H3 tails trimethylated on 'Lys-4' (H3K4me3), which mark transcription start sites of virtually all active genes. This is PHD finger protein ALFIN-LIKE 7 (AL7) from Arabidopsis thaliana (Mouse-ear cress).